We begin with the raw amino-acid sequence, 559 residues long: Potassium-transporting ATPase potassium-binding subunit (559 aa).

13 helical membrane passes run Gly-5 to Ser-25, Leu-27 to Trp-47, Leu-63 to Trp-83, Gly-132 to Ile-152, Leu-170 to Ile-190, Leu-253 to Ala-273, Leu-283 to Val-303, Phe-327 to Val-347, Ala-356 to Val-376, Gly-379 to Gly-399, Met-416 to Met-436, Leu-484 to Ala-504, and Gly-524 to Ile-544.

The protein belongs to the KdpA family. As to quaternary structure, the system is composed of three essential subunits: KdpA, KdpB and KdpC.

It is found in the cell inner membrane. In terms of biological role, part of the high-affinity ATP-driven potassium transport (or Kdp) system, which catalyzes the hydrolysis of ATP coupled with the electrogenic transport of potassium into the cytoplasm. This subunit binds the periplasmic potassium ions and delivers the ions to the membrane domain of KdpB through an intramembrane tunnel. This Salmonella typhi protein is Potassium-transporting ATPase potassium-binding subunit.